The primary structure comprises 396 residues: Elongation factor Tu (396 aa).

The tr-type G domain occupies 10–206 (KAHVNIGTIG…AVDEYIPDPV (197 aa)). The G1 stretch occupies residues 19–26 (GHVDHGKT). 19–26 (GHVDHGKT) serves as a coordination point for GTP. Thr26 contributes to the Mg(2+) binding site. Residues 62 to 66 (GITIN) form a G2 region. The tract at residues 83 to 86 (DAPG) is G3. Residues 83-87 (DAPGH) and 138-141 (NKSD) each bind GTP. Residues 138-141 (NKSD) are G4. A G5 region spans residues 176–178 (SAL).

This sequence belongs to the TRAFAC class translation factor GTPase superfamily. Classic translation factor GTPase family. EF-Tu/EF-1A subfamily. In terms of assembly, monomer.

The protein localises to the cytoplasm. The catalysed reaction is GTP + H2O = GDP + phosphate + H(+). In terms of biological role, GTP hydrolase that promotes the GTP-dependent binding of aminoacyl-tRNA to the A-site of ribosomes during protein biosynthesis. The polypeptide is Elongation factor Tu (Micrococcus luteus (Micrococcus lysodeikticus)).